We begin with the raw amino-acid sequence, 529 residues long: BTB/POZ domain-containing protein 6 (529 aa).

One can recognise a BTB domain in the interval 127 to 197 (ADVHFIVGPA…LYSDEIDLEA (71 aa)).

As to quaternary structure, homodimer and heterodimer. Interacts with cul3 via the BTB domain.

It is found in the cytoplasm. Adapter protein for the cul3 E3 ubiquitin-protein ligase complex. Involved in late neuronal development and muscle formation. The polypeptide is BTB/POZ domain-containing protein 6 (btbd6) (Xenopus tropicalis (Western clawed frog)).